Reading from the N-terminus, the 438-residue chain is Putative ZDHHC-type palmitoyltransferase 7 (438 aa).

N-linked (GlcNAc...) asparagine glycans are attached at residues Asn-12 and Asn-13. The next 2 helical transmembrane spans lie at Ile-48 to Leu-68 and Tyr-77 to Ile-97. 3 N-linked (GlcNAc...) asparagine glycosylation sites follow: Asn-119, Asn-144, and Asn-157. The interval Glu-183 to Asp-239 is disordered. 2 stretches are compositionally biased toward low complexity: residues Thr-190–Ile-206 and Asn-218–Asn-234. N-linked (GlcNAc...) asparagine glycosylation is present at Asn-231. Residues Tyr-249–Leu-299 form the DHHC domain. A run of 2 helical transmembrane segments spans residues Phe-294 to Thr-314 and Ile-330 to Phe-350. A glycan (N-linked (GlcNAc...) asparagine) is linked at Asn-360.

The protein belongs to the DHHC palmitoyltransferase family.

It localises to the membrane. The catalysed reaction is L-cysteinyl-[protein] + hexadecanoyl-CoA = S-hexadecanoyl-L-cysteinyl-[protein] + CoA. The protein is Putative ZDHHC-type palmitoyltransferase 7 of Dictyostelium discoideum (Social amoeba).